Reading from the N-terminus, the 314-residue chain is Small ribosomal subunit biogenesis GTPase RsgA (314 aa).

Residues 1-20 form a disordered region; the sequence is MKRAPTKQPAKPAARGGERA. Positions 85–246 constitute a CP-type G domain; the sequence is SDQFKSKLFA…LIDSPGFQEF (162 aa). Residues 134 to 137 and 188 to 196 each bind GTP; these read NKID and GQSGMGKST. Residues Cys270, Cys275, His277, and Cys283 each contribute to the Zn(2+) site.

This sequence belongs to the TRAFAC class YlqF/YawG GTPase family. RsgA subfamily. Monomer. Associates with 30S ribosomal subunit, binds 16S rRNA. Zn(2+) serves as cofactor.

The protein resides in the cytoplasm. Its function is as follows. One of several proteins that assist in the late maturation steps of the functional core of the 30S ribosomal subunit. Helps release RbfA from mature subunits. May play a role in the assembly of ribosomal proteins into the subunit. Circularly permuted GTPase that catalyzes slow GTP hydrolysis, GTPase activity is stimulated by the 30S ribosomal subunit. The chain is Small ribosomal subunit biogenesis GTPase RsgA from Burkholderia pseudomallei (strain K96243).